We begin with the raw amino-acid sequence, 264 residues long: 3-methyl-2-oxobutanoate hydroxymethyltransferase (264 aa).

Mg(2+) contacts are provided by Asp-45 and Asp-84. 3-methyl-2-oxobutanoate-binding positions include 45–46 (DS), Asp-84, and Lys-112. Glu-114 provides a ligand contact to Mg(2+). The Proton acceptor role is filled by Glu-181.

It belongs to the PanB family. In terms of assembly, homodecamer; pentamer of dimers. The cofactor is Mg(2+).

Its subcellular location is the cytoplasm. The enzyme catalyses 3-methyl-2-oxobutanoate + (6R)-5,10-methylene-5,6,7,8-tetrahydrofolate + H2O = 2-dehydropantoate + (6S)-5,6,7,8-tetrahydrofolate. The protein operates within cofactor biosynthesis; (R)-pantothenate biosynthesis; (R)-pantoate from 3-methyl-2-oxobutanoate: step 1/2. Functionally, catalyzes the reversible reaction in which hydroxymethyl group from 5,10-methylenetetrahydrofolate is transferred onto alpha-ketoisovalerate to form ketopantoate. This Shewanella putrefaciens (strain CN-32 / ATCC BAA-453) protein is 3-methyl-2-oxobutanoate hydroxymethyltransferase.